Consider the following 224-residue polypeptide: Small ribosomal subunit protein uS3 (224 aa).

One can recognise a KH type-2 domain in the interval 39–107 (IREFLKKKPS…DVWVEIAEVK (69 aa)).

This sequence belongs to the universal ribosomal protein uS3 family. In terms of assembly, part of the 30S ribosomal subunit. Forms a tight complex with proteins S10 and S14.

Binds the lower part of the 30S subunit head. Binds mRNA in the 70S ribosome, positioning it for translation. The chain is Small ribosomal subunit protein uS3 from Chlamydia trachomatis serovar D (strain ATCC VR-885 / DSM 19411 / UW-3/Cx).